The following is a 140-amino-acid chain: Putative nickel-responsive regulator 2 (140 aa).

Residues His81, His92, His94, and Cys100 each coordinate Ni(2+).

This sequence belongs to the transcriptional regulatory CopG/NikR family. Ni(2+) serves as cofactor.

Transcriptional regulator. This is Putative nickel-responsive regulator 2 from Methanosarcina mazei (strain ATCC BAA-159 / DSM 3647 / Goe1 / Go1 / JCM 11833 / OCM 88) (Methanosarcina frisia).